Here is a 694-residue protein sequence, read N- to C-terminus: uncharacterized protein (694 aa).

The Resolvase/invertase-type recombinase catalytic domain occupies 17–168; sequence DAFLYVRQSS…GGILNKARRG (152 aa). The O-(5'-phospho-DNA)-serine intermediate role is filled by serine 25. Residues 175-316 constitute a DNA-binding region (recombinase); the sequence is PIGLVYTPDA…QAALEQNATG (142 aa). A helical membrane pass occupies residues 386–406; sequence AVSALLLEVMAPAAIDVALAV.

The protein localises to the membrane. This is an uncharacterized protein from Sinorhizobium fredii (strain NBRC 101917 / NGR234).